Here is a 156-residue protein sequence, read N- to C-terminus: Ribosome maturation factor RimP (156 aa).

The protein belongs to the RimP family.

The protein localises to the cytoplasm. Functionally, required for maturation of 30S ribosomal subunits. This chain is Ribosome maturation factor RimP, found in Lachnospira eligens (strain ATCC 27750 / DSM 3376 / VPI C15-48 / C15-B4) (Eubacterium eligens).